The primary structure comprises 148 residues: Putative nickel-responsive regulator (148 aa).

4 residues coordinate Ni(2+): His-88, His-99, His-101, and Cys-107.

This sequence belongs to the transcriptional regulatory CopG/NikR family. Homotetramer. Ni(2+) is required as a cofactor.

In terms of biological role, transcriptional regulator. This Helicobacter pylori (strain J99 / ATCC 700824) (Campylobacter pylori J99) protein is Putative nickel-responsive regulator.